The following is a 565-amino-acid chain: Oxygen-dependent choline dehydrogenase (565 aa).

6 to 35 (DYIIVGAGSAGNTLATRLTEDAGVTVLLLE) contributes to the FAD binding site. The Proton acceptor role is filled by H475.

The protein belongs to the GMC oxidoreductase family. It depends on FAD as a cofactor.

It catalyses the reaction choline + A = betaine aldehyde + AH2. The catalysed reaction is betaine aldehyde + NAD(+) + H2O = glycine betaine + NADH + 2 H(+). It functions in the pathway amine and polyamine biosynthesis; betaine biosynthesis via choline pathway; betaine aldehyde from choline (cytochrome c reductase route): step 1/1. In terms of biological role, involved in the biosynthesis of the osmoprotectant glycine betaine. Catalyzes the oxidation of choline to betaine aldehyde and betaine aldehyde to glycine betaine at the same rate. The chain is Oxygen-dependent choline dehydrogenase from Pseudomonas putida (strain GB-1).